A 443-amino-acid polypeptide reads, in one-letter code: Histidinol dehydrogenase (443 aa).

3 residues coordinate NAD(+): Tyr-141, Gln-203, and Asn-226. Substrate is bound by residues Ser-249, Gln-271, and His-274. Zn(2+)-binding residues include Gln-271 and His-274. Residues Glu-339 and His-340 each act as proton acceptor in the active site. Positions 340, 373, 427, and 432 each coordinate substrate. Asp-373 contacts Zn(2+). A Zn(2+)-binding site is contributed by His-432.

Belongs to the histidinol dehydrogenase family. The cofactor is Zn(2+).

It carries out the reaction L-histidinol + 2 NAD(+) + H2O = L-histidine + 2 NADH + 3 H(+). It functions in the pathway amino-acid biosynthesis; L-histidine biosynthesis; L-histidine from 5-phospho-alpha-D-ribose 1-diphosphate: step 9/9. Its function is as follows. Catalyzes the sequential NAD-dependent oxidations of L-histidinol to L-histidinaldehyde and then to L-histidine. This is Histidinol dehydrogenase from Chlorobium luteolum (strain DSM 273 / BCRC 81028 / 2530) (Pelodictyon luteolum).